Reading from the N-terminus, the 70-residue chain is MLNPPLNQLQSKINSKYLIATTAAKRARELDERPETALLSGYHSAKPVGEALEEIASGKITPVVSDEFTM.

It belongs to the RNA polymerase subunit omega family. In terms of assembly, the RNAP catalytic core consists of 2 alpha, 1 beta, 1 beta' and 1 omega subunit. When a sigma factor is associated with the core the holoenzyme is formed, which can initiate transcription.

The catalysed reaction is RNA(n) + a ribonucleoside 5'-triphosphate = RNA(n+1) + diphosphate. Promotes RNA polymerase assembly. Latches the N- and C-terminal regions of the beta' subunit thereby facilitating its interaction with the beta and alpha subunits. The protein is DNA-directed RNA polymerase subunit omega of Staphylococcus haemolyticus (strain JCSC1435).